We begin with the raw amino-acid sequence, 103 residues long: Small ribosomal subunit protein uS10 (103 aa).

It belongs to the universal ribosomal protein uS10 family. Part of the 30S ribosomal subunit.

Involved in the binding of tRNA to the ribosomes. This Campylobacter jejuni subsp. jejuni serotype O:6 (strain 81116 / NCTC 11828) protein is Small ribosomal subunit protein uS10.